A 674-amino-acid polypeptide reads, in one-letter code: Pannexin-2 (674 aa).

The Cytoplasmic segment spans residues 11–53 (MATALLAGEKLRELILPGSQDDKAGALAALLLQLKLELPFDRV). Residues 54-74 (VTIGTVLVPILLVTLVFTKNF) traverse the membrane as a helical segment. Residues 75-125 (AEEPIYCYTPHNFTRDQALYARGYCWTELRDALPGVDASLWPSLFEHKFLP) are Extracellular-facing. An N-linked (GlcNAc...) asparagine glycan is attached at asparagine 86. The chain crosses the membrane as a helical span at residues 126–146 (YALLAFAAIMYVPALGWEFLA). Over 147–230 (STRLTSELNF…NFLAKLYLAR (84 aa)) the chain is Cytoplasmic. Residues 231 to 251 (HVLILLLSVVPISYLCTYYAT) form a helical membrane-spanning segment. Residues 252–295 (QKQNEFTCALGASPDGPVGSAGPTVRVSCKLPSVQLQRIIAGVD) are Extracellular-facing. Residues 296 to 316 (IVLLCFMNLIILVNLIHLFIF) form a helical membrane-spanning segment. Topologically, residues 317 to 674 (RKSNFIFDKL…PRTVVSTVEF (358 aa)) are cytoplasmic. Over residues 394–408 (TTPTVRDSGIQTVDP) the composition is skewed to polar residues. Disordered stretches follow at residues 394 to 426 (TTPT…VVKR) and 485 to 510 (AHHY…KKHT). Phosphoserine occurs at positions 590 and 601.

It belongs to the pannexin family. As to quaternary structure, forms PANX1/PANX2-heteromeric intercellular channels on coexpression in paired Xenopus oocytes. Does not form homomeric channels. S-palmitoylated in neural stem and progenitor cells. In terms of processing, cleaved by CASP3 and CASP7 during apoptosis. Cleavage has no effect on it function. As to expression, expressed in the eye, thyroid, prostate, kidney and liver. Abundantly expressed in the CNS, including hippocampus, olfactory bulb, cortex, cerebellum. Not detected in the white matter.

The protein localises to the cell membrane. It is found in the golgi apparatus membrane. Its subcellular location is the endoplasmic reticulum membrane. Structural component of the gap junctions and the hemichannels. In Rattus norvegicus (Rat), this protein is Pannexin-2 (Panx2).